Here is a 36-residue protein sequence, read N- to C-terminus: Protein usd (36 aa).

In terms of biological role, required for translation of SpoIIID. The protein is Protein usd (usd) of Bacillus subtilis (strain 168).